Consider the following 231-residue polypeptide: Large ribosomal subunit protein uL1 (231 aa).

It belongs to the universal ribosomal protein uL1 family. As to quaternary structure, part of the 50S ribosomal subunit.

In terms of biological role, binds directly to 23S rRNA. The L1 stalk is quite mobile in the ribosome, and is involved in E site tRNA release. Protein L1 is also a translational repressor protein, it controls the translation of the L11 operon by binding to its mRNA. This is Large ribosomal subunit protein uL1 from Saccharophagus degradans (strain 2-40 / ATCC 43961 / DSM 17024).